A 156-amino-acid polypeptide reads, in one-letter code: MSRRRRPEKREILPDPKFGDQVLSKFMNNLMLDGKKAVAEGIVYTALDTVEAKAKTDPVQLFHDALNNIKPQVEVRSRRVGGATYQVPVEVRPERAQALAIRWMISAARGRPETTMAARLSGELMDAANNRGNAVKKREDAHRMAEANRAFSHYRW.

It belongs to the universal ribosomal protein uS7 family. In terms of assembly, part of the 30S ribosomal subunit. Contacts proteins S9 and S11.

In terms of biological role, one of the primary rRNA binding proteins, it binds directly to 16S rRNA where it nucleates assembly of the head domain of the 30S subunit. Is located at the subunit interface close to the decoding center, probably blocks exit of the E-site tRNA. This Erythrobacter litoralis (strain HTCC2594) protein is Small ribosomal subunit protein uS7.